We begin with the raw amino-acid sequence, 201 residues long: 3-isopropylmalate dehydratase small subunit (201 aa).

It belongs to the LeuD family. LeuD type 1 subfamily. In terms of assembly, heterodimer of LeuC and LeuD.

It carries out the reaction (2R,3S)-3-isopropylmalate = (2S)-2-isopropylmalate. It functions in the pathway amino-acid biosynthesis; L-leucine biosynthesis; L-leucine from 3-methyl-2-oxobutanoate: step 2/4. Functionally, catalyzes the isomerization between 2-isopropylmalate and 3-isopropylmalate, via the formation of 2-isopropylmaleate. This is 3-isopropylmalate dehydratase small subunit from Rhodopseudomonas palustris (strain BisA53).